The following is a 154-amino-acid chain: Golgi-associated plant pathogenesis-related protein 1 (154 aa).

The tract at residues 1-21 is disordered; that stretch reads MGKSASKQFHNEVLKAHNEYR. Glycine 2 carries the N-myristoyl glycine lipid modification. Basic and acidic residues predominate over residues 9-21; that stretch reads FHNEVLKAHNEYR. An SCP domain is found at 14–132; the sequence is LKAHNEYRQK…SDGSSFVVAR (119 aa). Residues 30 to 53 are a coiled coil; sequence KLCKNLNREAQQYSEALASTRILK. Residues 91–98 form an interaction with CAV1 region; the sequence is NFQQPGFT.

It belongs to the CRISP family. In terms of assembly, homodimer. Interacts with CAV1. In terms of tissue distribution, highest expression in lung and peripheral leukocytes, and minor expression in liver and kidney.

It localises to the golgi apparatus membrane. The chain is Golgi-associated plant pathogenesis-related protein 1 (GLIPR2) from Homo sapiens (Human).